A 464-amino-acid chain; its full sequence is Asparagine--tRNA ligase (464 aa).

The protein belongs to the class-II aminoacyl-tRNA synthetase family. In terms of assembly, homodimer.

It localises to the cytoplasm. It carries out the reaction tRNA(Asn) + L-asparagine + ATP = L-asparaginyl-tRNA(Asn) + AMP + diphosphate + H(+). This Xanthomonas euvesicatoria pv. vesicatoria (strain 85-10) (Xanthomonas campestris pv. vesicatoria) protein is Asparagine--tRNA ligase.